Here is a 281-residue protein sequence, read N- to C-terminus: UPF0273 protein PAE3143 (281 aa).

The KaiC domain maps to proline 4–arginine 248. Glycine 31–serine 38 is a binding site for ATP.

It belongs to the UPF0273 family.

In Pyrobaculum aerophilum (strain ATCC 51768 / DSM 7523 / JCM 9630 / CIP 104966 / NBRC 100827 / IM2), this protein is UPF0273 protein PAE3143.